The sequence spans 33 residues: Beta-theraphotoxin-Cm1b (33 aa).

Intrachain disulfides connect Cys2/Cys17, Cys9/Cys22, and Cys16/Cys29. Position 33 is a leucine amide (Leu33).

This sequence belongs to the neurotoxin 10 (Hwtx-1) family. 04 (CcoTx1) subfamily. As to expression, expressed by the venom gland.

The protein resides in the secreted. Functionally, inhibits several voltage-gated sodium channels and only one voltage-gated calcium channel (Cav2.2/CACNA1B (IC(50)=1.1 uM) and Nav1.2/SCN2A (IC(50)=3.7-80 nM), Nav1.3/SCN3A (IC(50)=88-5570 nM), Nav1.1/SCN1A (IC(50)=170-407 nM), Nav1.7/SCN9A (IC(50)=95.5-230 nM), Nav1.6/SCN6A (IC(50)=49.9-3990 nM), Nav1.4/SCN4A (IC(50)=113-400 nM or &gt;10 uM), Nav1.5/SCN5A (IC(50)=1524-1634 nM or &gt;10 uM)). The toxin acts by shifting the voltage dependence of channel activation to more depolarized potentials and by blocking the inward component of the sodium current. It shows moderate affinity for lipid bilayers without cholesterol and high affinity for lipid bilayers containing cholesterol. In vivo, this toxin causes general ataxia, lack of response to stimuli, and semiparalysis. After a few minutes, the mice are unable to stand, and breathing is reduced in rhythm and intensity. Symptoms gradually increase with progressive slowing of breathing and flaccid paralysis; death occurred within 10 to 20 minutes post injection. Animals remain totally flaccid, and no symptoms of excitatory neurotoxicity are observed. This Ceratogyrus marshalli (Straighthorned baboon tarantula) protein is Beta-theraphotoxin-Cm1b.